Consider the following 152-residue polypeptide: Large ribosomal subunit protein bL9 (152 aa).

The protein belongs to the bacterial ribosomal protein bL9 family.

In terms of biological role, binds to the 23S rRNA. The protein is Large ribosomal subunit protein bL9 of Crocosphaera subtropica (strain ATCC 51142 / BH68) (Cyanothece sp. (strain ATCC 51142)).